We begin with the raw amino-acid sequence, 290 residues long: ATP synthase gamma chain (290 aa).

It belongs to the ATPase gamma chain family. F-type ATPases have 2 components, CF(1) - the catalytic core - and CF(0) - the membrane proton channel. CF(1) has five subunits: alpha(3), beta(3), gamma(1), delta(1), epsilon(1). CF(0) has three main subunits: a, b and c.

The protein localises to the cell membrane. Functionally, produces ATP from ADP in the presence of a proton gradient across the membrane. The gamma chain is believed to be important in regulating ATPase activity and the flow of protons through the CF(0) complex. The polypeptide is ATP synthase gamma chain (Roseiflexus castenholzii (strain DSM 13941 / HLO8)).